The primary structure comprises 2282 residues: Cation channel sperm-associated targeting subunit tau (2282 aa).

The interval 1-118 (MELPPPGNRR…RGKGKGTGTR (118 aa)) is disordered. 2 stretches are compositionally biased toward polar residues: residues 11 to 41 (VSIN…SLKR) and 50 to 87 (MMSN…NLSS). Positions 90–109 (YADEEGKPLTDKNKDKDKGR) are enriched in basic and acidic residues. Residues 131 to 266 (QSDEMAIANQ…IQKGCFTEVM (136 aa)) form the C2 domain. Disordered regions lie at residues 397-416 (MTKR…SSAL), 656-679 (EHED…TWAE), 747-1066 (NKLI…SHDP), 1104-1153 (SAKS…DKQS), 1217-1240 (YTND…TDDR), 1426-1445 (NSLL…DSRS), 1452-1515 (RQNT…SLDK), 1542-1569 (ERRQ…LEKT), 1908-1928 (NQAN…LKKQ), and 2187-2222 (PKKS…EPNK). 5 stretches are compositionally biased toward polar residues: residues 750-760 (ITDSSFNTTKP), 783-792 (SDPSSNTTKP), 800-841 (DPSS…SDLN), 849-858 (IVSTISSDPN), and 953-974 (SARS…TKLS). The segment covering 1104 to 1123 (SAKSLDSNNSSASSSPTVNS) has biased composition (low complexity). A compositionally biased stretch (polar residues) spans 1124-1136 (DTTTNAAEPSGTK). Polar residues-rich tracts occupy residues 1452-1466 (RQNT…SSVS) and 1473-1482 (DCQSISTQES). The span at 1484–1493 (YPVRDTKSDS) shows a compositional bias: basic and acidic residues. Residues 1495 to 1504 (NDTEEMELDS) are compositionally biased toward acidic residues. Basic and acidic residues-rich tracts occupy residues 1542–1555 (ERRQ…ESLI) and 1916–1925 (SPERPSDISL).

As to quaternary structure, component of the CatSper complex or CatSpermasome composed of the core pore-forming members CATSPER1, CATSPER2, CATSPER3 and CATSPER4 as well as auxiliary members CATSPERB, CATSPERG, CATSPERD, CATSPERE, CATSPERZ, C2CD6/CATSPERT, SLCO6C1, TMEM249, TMEM262 and EFCAB9. HSPA1 may be an additional auxiliary complex member. The core complex members CATSPER1, CATSPER2, CATSPER3 and CATSPER4 form a heterotetrameric channel. The auxiliary CATSPERB, CATSPERG, CATSPERD and CATSPERE subunits form a pavilion-like structure over the pore which stabilizes the complex through interactions with CATSPER4, CATSPER3, CATSPER1 and CATSPER2 respectively. SLCO6C1 interacts with CATSPERE and TMEM262/CATSPERH interacts with CATSPERB, further stabilizing the complex. C2CD6/CATSPERT interacts at least with CATSPERD and is required for targeting the CatSper complex in the flagellar membrane. In terms of tissue distribution, expressed in cauda sperm (at protein level).

It is found in the cell projection. It localises to the cilium. Its subcellular location is the flagellum membrane. In terms of biological role, auxiliary component of the CatSper complex, a complex involved in sperm cell hyperactivation. Sperm cell hyperactivation is needed for sperm motility which is essential late in the preparation of sperm for fertilization. Required for CatSper complex targeting and trafficking into the quadrilinear nanodomains. Targets the preassembled CatSper complexes to elongating flagella, where it links the channel-carrying vesicles and motor proteins. This chain is Cation channel sperm-associated targeting subunit tau, found in Mus musculus (Mouse).